The sequence spans 53 residues: uncharacterized protein (53 aa).

Belongs to the ycf15 family.

The protein localises to the plastid. It is found in the chloroplast. This is an uncharacterized protein from Helianthus annuus (Common sunflower).